The following is a 373-amino-acid chain: Transaldolase (373 aa).

The active-site Schiff-base intermediate with substrate is Lys143.

Belongs to the transaldolase family. Type 2 subfamily.

It is found in the cytoplasm. The enzyme catalyses D-sedoheptulose 7-phosphate + D-glyceraldehyde 3-phosphate = D-erythrose 4-phosphate + beta-D-fructose 6-phosphate. It functions in the pathway carbohydrate degradation; pentose phosphate pathway; D-glyceraldehyde 3-phosphate and beta-D-fructose 6-phosphate from D-ribose 5-phosphate and D-xylulose 5-phosphate (non-oxidative stage): step 2/3. Transaldolase is important for the balance of metabolites in the pentose-phosphate pathway. The polypeptide is Transaldolase (Mycobacterium marinum (strain ATCC BAA-535 / M)).